Here is a 183-residue protein sequence, read N- to C-terminus: Photosystem I assembly protein Ycf3 (183 aa).

3 TPR repeats span residues 35 to 68 (AFIY…EIDS), 72 to 105 (SYIL…NSFL), and 120 to 153 (GEQA…SPDN).

The protein belongs to the Ycf3 family.

Its subcellular location is the plastid. It localises to the chloroplast thylakoid membrane. In terms of biological role, essential for the assembly of the photosystem I (PSI) complex. May act as a chaperone-like factor to guide the assembly of the PSI subunits. This Adiantum capillus-veneris (Maidenhair fern) protein is Photosystem I assembly protein Ycf3.